We begin with the raw amino-acid sequence, 206 residues long: Endoplasmic reticulum transmembrane protein 1 (206 aa).

Over 1–7 (MSLYFTT) the chain is Lumenal. The chain crosses the membrane as a helical span at residues 8 to 28 (LFLLLTVEMVMLFIFVLPLPF). Over 29–45 (RIRRGIFSTYNQLTAKQ) the chain is Cytoplasmic. The chain crosses the membrane as a helical span at residues 46–66 (QIKTIIFITGCLVGLLFIDSW). Residues 67–104 (KRSQIRVSLYHNDNSGSIGSSAVTPIQALASRAYNQRN) lie on the Lumenal side of the membrane. Residues 105 to 125 (MYISGFILYFSICIPTVMSIV) traverse the membrane as a helical segment. Over 126 to 206 (KRLVKYQGLI…AAAEASKKGN (81 aa)) the chain is Cytoplasmic. A disordered region spans residues 140-163 (KQKLNKPSSNSKKDSNEADSTKLQ). Positions 150–163 (SKKDSNEADSTKLQ) are enriched in basic and acidic residues. A Glycyl lysine isopeptide (Lys-Gly) (interchain with G-Cter in ubiquitin) cross-link involves residue Lys-190. The short motif at 203–206 (KKGN) is the Di-lysine motif element.

The protein belongs to the BCAP29/BCAP31 family.

The protein localises to the endoplasmic reticulum membrane. Its function is as follows. May play a role in anterograde transport of membrane proteins from the endoplasmic reticulum to the Golgi. This Saccharomyces cerevisiae (strain ATCC 204508 / S288c) (Baker's yeast) protein is Endoplasmic reticulum transmembrane protein 1 (YET1).